The sequence spans 504 residues: Kinesin light chain 3 (504 aa).

Residues 90-150 are a coiled coil; that stretch reads ALSAHVGALE…EEEKRHLEFL (61 aa). Residues 153-197 are disordered; sequence LRQYDPPAESQQSESPPRRDSLASLFPSEEEERKGPEAAGAAAAQ. A compositionally biased stretch (low complexity) spans 158-167; it reads PPAESQQSES. Position 173 is a phosphoserine (Ser-173). TPR repeat units follow at residues 207-240, 249-282, 291-324, 333-366, and 375-408; these read LRTL…LERS, ATML…REQT, AATL…REKV, AKQL…YEAL, and AKTK…EDLP. A disordered region spans residues 411 to 438; the sequence is LGAPNTGTAGDAEQALRRSSSLSKIRES. Position 466 is a phosphoserine (Ser-466). A disordered region spans residues 472–504; the sequence is VDAPRAPGTQFPSWHLDKAPRTLSASTQDLSPH. Residues 494–504 are compositionally biased toward polar residues; that stretch reads LSASTQDLSPH. A Phosphothreonine modification is found at Thr-498. Phosphoserine is present on Ser-502.

Belongs to the kinesin light chain family. Oligomer composed of two heavy chains and two light chains. Associates with microtubulin in an ATP-dependent manner. Interacts with KIF5C. Interacts with ODF1. Interacts with LRGUK. Interacts with VDAC2.

Its subcellular location is the cytoplasm. The protein localises to the cytoskeleton. It is found in the mitochondrion. In terms of biological role, kinesin is a microtubule-associated force-producing protein that may play a role in organelle transport. Plays a role during spermiogenesis in the development of the sperm tail midpiece and in the normal function of spermatozoa. May play a role in the formation of the mitochondrial sheath formation in the developing spermatid midpiece. The chain is Kinesin light chain 3 (KLC3) from Homo sapiens (Human).